The chain runs to 195 residues: Replication restart protein PriC (195 aa).

This sequence belongs to the PriC family. As to quaternary structure, monomer. Component of the replication restart primosome, which is composed of PriA, PriB, PriC, DnaB and DnaT; DnaG primase associates transiently with this complex. Interacts with the C-terminus of SSB; this interaction is required to load the main replicative helicase onto substrate replication forks. Interacts with helicase DnaB alone and in the DnaB-DnaC complex, probably 1:1 binding with DnaB.

In terms of biological role, involved in the restart of stalled replication forks, which reloads the DnaB replicative helicase on sites other than the origin of replication. Recognizes abandoned replication forks and remodels DNA single-stranded binding protein (SSB) on ssDNA to uncover a loading site for DnaB. There are several restart pathways, the PriA-PriC pathway is a minor restart pathway. Part of the minor PriC-Rep pathway for restart of stalled replication forks, which has a different substrate specificity than PriA. Part of the major restart pathway with PriA, PriB, DnaB, DnaT and DnaG primase. priB and priC have redundant roles in the cell. The chain is Replication restart protein PriC from Haemophilus influenzae (strain ATCC 51907 / DSM 11121 / KW20 / Rd).